Here is a 156-residue protein sequence, read N- to C-terminus: ATP synthase subunit b (156 aa).

Residues 11-31 (AIAFVLFVLFCMKYVWPPLMA) traverse the membrane as a helical segment.

It belongs to the ATPase B chain family. As to quaternary structure, F-type ATPases have 2 components, F(1) - the catalytic core - and F(0) - the membrane proton channel. F(1) has five subunits: alpha(3), beta(3), gamma(1), delta(1), epsilon(1). F(0) has three main subunits: a(1), b(2) and c(10-14). The alpha and beta chains form an alternating ring which encloses part of the gamma chain. F(1) is attached to F(0) by a central stalk formed by the gamma and epsilon chains, while a peripheral stalk is formed by the delta and b chains.

Its subcellular location is the cell inner membrane. In terms of biological role, f(1)F(0) ATP synthase produces ATP from ADP in the presence of a proton or sodium gradient. F-type ATPases consist of two structural domains, F(1) containing the extramembraneous catalytic core and F(0) containing the membrane proton channel, linked together by a central stalk and a peripheral stalk. During catalysis, ATP synthesis in the catalytic domain of F(1) is coupled via a rotary mechanism of the central stalk subunits to proton translocation. Component of the F(0) channel, it forms part of the peripheral stalk, linking F(1) to F(0). The chain is ATP synthase subunit b from Citrobacter koseri (strain ATCC BAA-895 / CDC 4225-83 / SGSC4696).